A 526-amino-acid chain; its full sequence is Tyrosine-protein kinase transforming protein Src (526 aa).

A disordered region spans residues 1 to 52 (MGSSKSKPKDPSQRRHSLEPPDSTHHGGFPASQTPDETAAPDAHRNPSRSFG). A lipid anchor (N-myristoyl glycine; by host) is attached at Gly-2. The segment covering 7–25 (KPKDPSQRRHSLEPPDSTH) has biased composition (basic and acidic residues). SH3 domains are found at residues 71-139 (TSPQ…YVAP) and 81-142 (GGVT…PSDS). One can recognise an SH2 domain in the interval 148 to 245 (WYFGKITRRE…GLCHRLANVC (98 aa)). Residues 267 to 517 (LRLEAKLGQG…TFKYLQAQLL (251 aa)) form the Protein kinase domain. Residues 273-281 (LGQGCFGEV) and Lys-295 contribute to the ATP site. Asp-386 functions as the Proton acceptor in the catalytic mechanism. At Tyr-416 the chain carries Phosphotyrosine; by autocatalysis.

Belongs to the protein kinase superfamily. Tyr protein kinase family. SRC subfamily. In terms of assembly, homodimer. In terms of processing, the phosphorylated form is termed pp60v-src.

It catalyses the reaction L-tyrosyl-[protein] + ATP = O-phospho-L-tyrosyl-[protein] + ADP + H(+). In terms of biological role, this phosphoprotein, required for both the initiation and the maintenance of neoplastic transformation, is a protein kinase that catalyzes the phosphorylation of tyrosine residues in vitro. The polypeptide is Tyrosine-protein kinase transforming protein Src (V-SRC) (Gallus gallus (Chicken)).